We begin with the raw amino-acid sequence, 601 residues long: Mitochondrial tRNA methylthiotransferase CDK5RAP1 (601 aa).

The N-terminal 33 residues, methionine 1 to histidine 33, are a transit peptide targeting the mitochondrion. The MTTase N-terminal domain maps to arginine 100 to serine 220. Positions 109, 145, 183, 258, 262, and 265 each coordinate [4Fe-4S] cluster. Residues serine 244–lysine 512 form the Radical SAM core domain. In terms of domain architecture, TRAM spans glutamine 515–cysteine 590.

The protein belongs to the methylthiotransferase family. MiaB subfamily. As to quaternary structure, interacts with CDK5R1 (p35 form). CDK5RAP1, CDK5RAP2 and CDK5RAP3 show competitive binding to CDK5R1. Forms a complex with CDK5R1 and CDK5. [4Fe-4S] cluster serves as cofactor. Expressed in heart, brain, placenta, lung, liver, skeletal muscle, kidney and pancreas. Expressed in neurons of central nervous tissue. In terms of tissue distribution, mainly expressed in brain, placenta and testis. As to expression, high expression in placenta and lung.

It localises to the mitochondrion. It carries out the reaction N(6)-dimethylallyladenosine(37) in tRNA + (sulfur carrier)-SH + AH2 + 2 S-adenosyl-L-methionine = 2-methylsulfanyl-N(6)-dimethylallyladenosine(37) in tRNA + (sulfur carrier)-H + 5'-deoxyadenosine + L-methionine + A + S-adenosyl-L-homocysteine + 2 H(+). In terms of biological role, methylthiotransferase that catalyzes the conversion of N6-(dimethylallyl)adenosine (i(6)A) to 2-methylthio-N6-(dimethylallyl)adenosine (ms(2)i(6)A) at position 37 (adjacent to the 3'-end of the anticodon) of four mitochondrial DNA-encoded tRNAs (Ser(UCN), Phe, Tyr and Trp). Essential for efficient and highly accurate protein translation by the ribosome. Specifically inhibits CDK5 activation by CDK5R1. Essential for efficient mitochondrial protein synthesis and respiratory chain; shows pathological consequences in mitochondrial disease. The protein is Mitochondrial tRNA methylthiotransferase CDK5RAP1 of Homo sapiens (Human).